The primary structure comprises 265 residues: uncharacterized protein (265 aa).

Residues 3 to 23 (KKTWVYIIIAIIIILLLVWYF) form a helical; Signal-anchor for type II membrane protein membrane-spanning segment. N-linked (GlcNAc...) asparagine; by host glycans are attached at residues Asn37 and Asn125. A coiled-coil region spans residues 37–94 (NQTYNMLQQQISSLNQQILFLKQQISNLHVPAPTSTVNSLRQTVSDINQQVSTINNQI). Residues 158–257 (NVADNELNVL…KNSLGSAVRN (100 aa)) adopt a coiled-coil conformation.

It is found in the host membrane. The protein resides in the virion. This is an uncharacterized protein from Acanthamoeba polyphaga (Amoeba).